Consider the following 140-residue polypeptide: Large ribosomal subunit protein uL14 (140 aa).

This sequence belongs to the universal ribosomal protein uL14 family.

The sequence is that of Large ribosomal subunit protein uL14 (RPL23) from Nicotiana tabacum (Common tobacco).